Reading from the N-terminus, the 433-residue chain is Histone acetyltransferase type B subunit 2 (433 aa).

5 WD repeats span residues 134 to 174 (NHDG…NTPS), 187 to 227 (GQHK…KPNN), 237 to 277 (GHTA…SAPK), 282 to 322 (AHTG…VKLH), and 326 to 366 (SHTD…QEQT). The interval 368–372 (DDAED) is interaction with the histone H4 N-terminus. One copy of the WD 6 repeat lies at 383–433 (GHTSRPTDLAWSPHMEWALTSAAEDNIVMVWRPSKAVIDTGNEELTPDDLE).

It belongs to the WD repeat RBAP46/RBAP48/MSI1 family. As to quaternary structure, component of the HAT-B complex composed of at least HAT1 and HAT2. The HAT-B complex binds to histone H4 tail.

It is found in the cytoplasm. The protein resides in the nucleus. Regulatory subunit of the histone acetylase B (HAT-B) complex. The complex acetylates 'Lys-12' of histone H4 which is required for telomeric silencing. The polypeptide is Histone acetyltransferase type B subunit 2 (HAT2) (Mycosarcoma maydis (Corn smut fungus)).